The chain runs to 178 residues: Large ribosomal subunit protein uL6 (178 aa).

Belongs to the universal ribosomal protein uL6 family. In terms of assembly, part of the 50S ribosomal subunit.

Its function is as follows. This protein binds to the 23S rRNA, and is important in its secondary structure. It is located near the subunit interface in the base of the L7/L12 stalk, and near the tRNA binding site of the peptidyltransferase center. The sequence is that of Large ribosomal subunit protein uL6 from Campylobacter jejuni subsp. doylei (strain ATCC BAA-1458 / RM4099 / 269.97).